A 328-amino-acid polypeptide reads, in one-letter code: MGVLRVGLCPGLTEEMIQLLRSHRIKTVVDLVSADLEEVAQKCGLSYKALVALRRVLLAQFSAFPVNGADLYEELKTSTAILSTGIGSLDKLLDAGLYTGEVTEIVGGPGSGKTQVCLCMAANVAHGLQQNVLYVDSNGGLTASRLLQLLQAKTQDEEEQAEALRRIQVVHAFDIFQMLDVLQELRGTVAQQVTGSSGTVKVVVVDSVTAVVSPLLGGQQREGLALMMQLARELKTLARDLGMAVVVTNHITRDRDSGRLKPALGRSWSFVPSTRILLDTIEGAGASGGRRMACLAKSSRQPTGFQEMVDIGTWGTSEQSATLQGDQT.

The tract at residues 1-83 is preferentially binds ssDNA; the sequence is MGVLRVGLCP…ELKTSTAILS (83 aa). ATP is bound at residue 107 to 114; the sequence is GGPGSGKT.

Belongs to the RecA family. RAD51 subfamily. As to quaternary structure, part of the BCDX2 complex consisting of RAD51B, RAD51C, RAD51D and XRCC2; the complex has a ring-like structure arranged into a flat disc around a central channel. In the absence of DNA, the BCDX2 subcomplex XRCC2:RAD51D formed a multimeric ring structure; in the presence of single-stranded DNA it formed a filamentous structure with the ssDNA. Interacts with SWSAP1 and ZSWIM7; involved in homologous recombination repair. Interacts with BLM; required for stimulation of BLM activity by the BCDX2 subcomplex XRCC2:RAD51D. In terms of tissue distribution, expressed in colon, prostate, spleen, testis, ovary, thymus and small intestine. Weakly expressed in leukocytes.

It is found in the nucleus. It localises to the cytoplasm. The protein localises to the cytoskeleton. Its subcellular location is the microtubule organizing center. The protein resides in the centrosome. It is found in the chromosome. It localises to the telomere. Functionally, involved in the homologous recombination repair (HRR) pathway of double-stranded DNA breaks arising during DNA replication or induced by DNA-damaging agents. Bind to single-stranded DNA (ssDNA) and has DNA-dependent ATPase activity. Part of the RAD51 paralog protein complex BCDX2 which acts in the BRCA1-BRCA2-dependent HR pathway. Upon DNA damage, BCDX2 acts downstream of BRCA2 recruitment and upstream of RAD51 recruitment. BCDX2 binds predominantly to the intersection of the four duplex arms of the Holliday junction and to junction of replication forks. The BCDX2 complex was originally reported to bind single-stranded DNA, single-stranded gaps in duplex DNA and specifically to nicks in duplex DNA. Involved in telomere maintenance. The BCDX2 subcomplex XRCC2:RAD51D can stimulate Holliday junction resolution by BLM. In Homo sapiens (Human), this protein is DNA repair protein RAD51 homolog 4 (RAD51D).